Consider the following 485-residue polypeptide: Zinc finger protein 639 (485 aa).

The span at Met-1–His-14 shows a compositional bias: basic residues. The interval Met-1–Asp-20 is disordered. Residue Ser-60 is modified to Phosphoserine. A Glycyl lysine isopeptide (Lys-Gly) (interchain with G-Cter in SUMO2) cross-link involves residue Lys-76. Ser-88 is modified (phosphoserine). Residues Lys-177, Lys-181, and Lys-226 each participate in a glycyl lysine isopeptide (Lys-Gly) (interchain with G-Cter in SUMO2) cross-link. 8 C2H2-type zinc fingers span residues Tyr-204–His-227, Asn-233–His-255, Tyr-260–His-283, Tyr-289–His-311, Phe-374–His-397, His-403–His-425, Tyr-431–His-454, and His-460–His-482. Positions Lys-371–Ser-455 are interaction with CTNNA2.

Belongs to the krueppel C2H2-type zinc-finger protein family. Interacts with CTNNA2.

It localises to the nucleus. Binds DNA and may function as a transcriptional repressor. This Bos taurus (Bovine) protein is Zinc finger protein 639 (ZNF639).